A 165-amino-acid polypeptide reads, in one-letter code: uncharacterized protein (165 aa).

The next 6 membrane-spanning stretches (helical) occupy residues 6-26, 28-48, 54-74, 78-98, 110-130, and 138-158; these read ILFPCLLLAASVYAWLESGQA, LFSGQDQWPVLLMLLGAAFVY, AVTPHFFIGLLLFGIGLHFFA, WVWWPDDFEMLLFMIGFSLLV, AVSMICFSLFLYFFKQIMAWL, and ALLKEYWPFVFIGISLLLLLI.

The protein localises to the cell membrane. This is an uncharacterized protein from Bacillus subtilis (strain 168).